A 143-amino-acid chain; its full sequence is Hemoglobin subunit alpha-2 (143 aa).

Position 2 is an N-acetylserine (serine 2). The Globin domain occupies 2–143 (SLSAKDKATV…LALALSEKYR (142 aa)). Histidine 60 provides a ligand contact to O2. Residue histidine 89 coordinates heme b.

Belongs to the globin family. In terms of assembly, hb 2 is a heterotetramer of two alpha-2 and two beta-1 chains. Hb 3 is a heterotetramer of two alpha-2 and two beta-2 chains. In terms of tissue distribution, red blood cells.

In terms of biological role, involved in oxygen transport from gills to the various peripheral tissues. The sequence is that of Hemoglobin subunit alpha-2 (hba2) from Boreogadus saida (Polar cod).